Reading from the N-terminus, the 152-residue chain is Acidic phospholipase A2 S17-58 (152 aa).

An N-terminal signal peptide occupies residues 1-19 (MYPAHLLVLLAVCVSLLGA). A propeptide spanning residues 20–27 (SNIPLPSL) is cleaved from the precursor. 7 disulfides stabilise this stretch: C38–C104, C54–C151, C56–C72, C71–C132, C78–C125, C88–C118, and C111–C123. Ca(2+)-binding residues include Y55, G57, and G59. H75 is an active-site residue. D76 contacts Ca(2+). Residue D126 is part of the active site.

It belongs to the phospholipase A2 family. Group I subfamily. D49 sub-subfamily. Requires Ca(2+) as cofactor. Expressed by the venom gland.

The protein resides in the secreted. It catalyses the reaction a 1,2-diacyl-sn-glycero-3-phosphocholine + H2O = a 1-acyl-sn-glycero-3-phosphocholine + a fatty acid + H(+). Snake venom phospholipase A2 (PLA2) that inhibits collagen-induced platelet aggregation. PLA2 catalyzes the calcium-dependent hydrolysis of the 2-acyl groups in 3-sn-phosphoglycerides. The polypeptide is Acidic phospholipase A2 S17-58 (Austrelaps superbus (Lowland copperhead snake)).